The primary structure comprises 225 residues: Ribonuclease 3 (225 aa).

The RNase III domain occupies 7-132 (MKAFEARLGY…VIAAVYRDGG (126 aa)). Residue Glu-45 coordinates Mg(2+). Asp-49 is an active-site residue. Positions 118 and 121 each coordinate Mg(2+). Glu-121 is an active-site residue. Residues 157-225 (DAKTALQEWA…AARKLLDSLD (69 aa)) form the DRBM domain.

This sequence belongs to the ribonuclease III family. Homodimer. It depends on Mg(2+) as a cofactor.

The protein resides in the cytoplasm. It catalyses the reaction Endonucleolytic cleavage to 5'-phosphomonoester.. Digests double-stranded RNA. Involved in the processing of primary rRNA transcript to yield the immediate precursors to the large and small rRNAs (23S and 16S). Processes some mRNAs, and tRNAs when they are encoded in the rRNA operon. Processes pre-crRNA and tracrRNA of type II CRISPR loci if present in the organism. The chain is Ribonuclease 3 from Ruegeria pomeroyi (strain ATCC 700808 / DSM 15171 / DSS-3) (Silicibacter pomeroyi).